A 33-amino-acid chain; its full sequence is Pardaxin P-2 (33 aa).

This sequence belongs to the pardaxin family. In terms of assembly, in aqueous solution exists as a tetramer.

The protein localises to the secreted. It is found in the target cell membrane. In terms of biological role, exhibits unusual shark repellent and surfactant properties. Forms voltage-dependent, ion-permeable channels in membranes. At high concentration causes cell membrane lysis. This is Pardaxin P-2 from Pardachirus pavoninus (Peacock sole).